Here is a 245-residue protein sequence, read N- to C-terminus: 1-(5-phosphoribosyl)-5-[(5-phosphoribosylamino)methylideneamino] imidazole-4-carboxamide isomerase (245 aa).

The active-site Proton acceptor is the Asp-7. Asp-129 functions as the Proton donor in the catalytic mechanism.

Belongs to the HisA/HisF family.

The protein resides in the cytoplasm. The catalysed reaction is 1-(5-phospho-beta-D-ribosyl)-5-[(5-phospho-beta-D-ribosylamino)methylideneamino]imidazole-4-carboxamide = 5-[(5-phospho-1-deoxy-D-ribulos-1-ylimino)methylamino]-1-(5-phospho-beta-D-ribosyl)imidazole-4-carboxamide. It functions in the pathway amino-acid biosynthesis; L-histidine biosynthesis; L-histidine from 5-phospho-alpha-D-ribose 1-diphosphate: step 4/9. In Pectobacterium atrosepticum (strain SCRI 1043 / ATCC BAA-672) (Erwinia carotovora subsp. atroseptica), this protein is 1-(5-phosphoribosyl)-5-[(5-phosphoribosylamino)methylideneamino] imidazole-4-carboxamide isomerase.